The chain runs to 89 residues: Defensin-like protein 147 (89 aa).

The signal sequence occupies residues 1-24; it reads MKKIFQLSFTVFIIFISLVLGVVG. Intrachain disulfides connect Cys34–Cys82, Cys46–Cys66, Cys51–Cys79, and Cys55–Cys81.

Belongs to the DEFL family. In terms of tissue distribution, expressed in flower buds, but not in stems, roots or rosette leaves.

It localises to the secreted. The chain is Defensin-like protein 147 (LCR1) from Arabidopsis thaliana (Mouse-ear cress).